The primary structure comprises 115 residues: NAD(P)H-quinone oxidoreductase subunit M (115 aa).

The protein belongs to the complex I NdhM subunit family. In terms of assembly, NDH-1 can be composed of about 15 different subunits; different subcomplexes with different compositions have been identified which probably have different functions.

It localises to the cellular thylakoid membrane. It catalyses the reaction a plastoquinone + NADH + (n+1) H(+)(in) = a plastoquinol + NAD(+) + n H(+)(out). It carries out the reaction a plastoquinone + NADPH + (n+1) H(+)(in) = a plastoquinol + NADP(+) + n H(+)(out). Its function is as follows. NDH-1 shuttles electrons from an unknown electron donor, via FMN and iron-sulfur (Fe-S) centers, to quinones in the respiratory and/or the photosynthetic chain. The immediate electron acceptor for the enzyme in this species is believed to be plastoquinone. Couples the redox reaction to proton translocation, and thus conserves the redox energy in a proton gradient. Cyanobacterial NDH-1 also plays a role in inorganic carbon-concentration. The protein is NAD(P)H-quinone oxidoreductase subunit M of Prochlorococcus marinus (strain MIT 9515).